We begin with the raw amino-acid sequence, 242 residues long: High mobility group protein homolog (242 aa).

DNA-binding regions (HMG box) lie at residues 54-122 and 126-197; these read PKRN…EANK and KPVK…IDKE.

Its subcellular location is the host nucleus. This chain is High mobility group protein homolog (EF1), found in Acheta domesticus (House cricket).